The chain runs to 350 residues: MLQRAEPQDFERVLSSMCTVPHPSAREAAERFLATNPGDPGTYETIAGLEREAVEYLGDITGLSDPAGYVASGGTEANLQAIRIARNRADTDDPNVVAPVHAHFSFTKAADVLGVELRTAPAADYRVNMAAMAELVDEDTVCVVGVAGSTEYGYVDPIPAIADLAETVDALCHVDAAWGGFYLPFTDHDWHFGHADIDTMTIDPHKVGQAAVPAGGLLARDRTLLDELAVETPYLESTDQLTLTGTRSGAGVASAVAAMESLWPAGYRQQYETSMANADWLADQLSARGHDVVGPELPLVAADLSMPMTDELRDRGWRVSKTGAGEMRVVCMPHVTRSMLRSFVADLDWY.

At lysine 206 the chain carries N6-(pyridoxal phosphate)lysine.

This sequence belongs to the group II decarboxylase family. MfnA subfamily. The cofactor is pyridoxal 5'-phosphate.

It catalyses the reaction L-aspartate + H(+) = beta-alanine + CO2. Its pathway is cofactor biosynthesis; coenzyme A biosynthesis. Functionally, catalyzes the decarboxylation of L-aspartate to produce beta-alanine. The protein is Probable L-aspartate decarboxylase of Haloarcula marismortui (strain ATCC 43049 / DSM 3752 / JCM 8966 / VKM B-1809) (Halobacterium marismortui).